A 219-amino-acid chain; its full sequence is Protein Ac132 (219 aa).

The interval 1-34 (MSDKTPTKKGGSHAMTLRERGVTKPPKKSEKLQQ) is disordered. Basic and acidic residues predominate over residues 16–33 (TLRERGVTKPPKKSEKLQ). Positions 103-134 (YPMAYFVNTDYKLKLECARIRSDLLYKNKNEV) are NEBU-like domain.

In terms of assembly, interacts with viral envelope protein E18 and the DNA-binding protein p6.9.

It is found in the host cytoplasm. The protein resides in the host nucleus. It localises to the virion. Functionally, plays an essential role in nucleocapsid entry in host nucleus. May act by binding and stabilizing F-actin in the infected cell, which might attach to nucleocapsids and then push the nucleocapsids into the nucleus. This is Protein Ac132 (Ac132) from Autographa californica nuclear polyhedrosis virus (AcMNPV).